A 727-amino-acid polypeptide reads, in one-letter code: Testis anion transporter 1 (727 aa).

The Cytoplasmic segment spans residues 1–23; that stretch reads MLTIFPFLEWMCMYRLKDWLLGD. Residues 24–44 form a helical membrane-spanning segment; sequence LLAGISVGLVQVPQGLTLSLL. Residues 45-47 are Extracellular-facing; it reads ARQ. A helical membrane pass occupies residues 48–68; it reads LIPPLNIAYAAFCSSVIYVIF. At 69-74 the chain is on the cytoplasmic side; sequence GSCHQM. A helical transmembrane segment spans residues 75–95; the sequence is SIGSFFLVSALLINVLKISPL. Residues 96–130 lie on the Extracellular side of the membrane; sequence NNGHLVMGSFLKDEFSAPSYLMGYNKSLSVVATTT. A glycan (N-linked (GlcNAc...) asparagine) is linked at asparagine 120. A helical membrane pass occupies residues 131-151; sequence FLTGIIQLIMGVLGLGFIATY. The Cytoplasmic segment spans residues 152–160; it reads LPESAMSAY. Residues 161–181 form a helical membrane-spanning segment; the sequence is LAAVALHIMLSQLTCIFGIMI. Over 182-198 the chain is Extracellular; the sequence is SFHAGPISFFYDIINYC. Residues 199–219 traverse the membrane as a helical segment; it reads VALPKANSTSILLFLTVVVAL. At 220-235 the chain is on the cytoplasmic side; that stretch reads RINKCIRISFNQYPIE. A helical transmembrane segment spans residues 236-256; that stretch reads FPMELFLIIGFTVIGNKITMA. The Extracellular portion of the chain corresponds to 257–283; the sequence is TETSQTLIDMIPYSFLFPVTPDFSVLP. A helical membrane pass occupies residues 284 to 304; that stretch reads KIILQAISLSLVSSFLLVFLG. Over 305–360 the chain is Cytoplasmic; that stretch reads KKIASLHNYSVNSNQDLIAIGLCNVVSSFFRSCVFTGAVARTIIQDKSGGRQQFAS. A helical transmembrane segment spans residues 361–381; that stretch reads LVGAGVMLLLMVKMGHFFYAL. Residues 382–383 lie on the Extracellular side of the membrane; sequence PN. Residues 384 to 404 traverse the membrane as a helical segment; that stretch reads AVLAGIILSNVVPYLETISNL. Residues 405 to 424 lie on the Cytoplasmic side of the membrane; the sequence is PSLWRQDQYDCALWMMTFSS. Residues 425–445 traverse the membrane as a helical segment; sequence SIFLGLDIGLIISVVSAFFIT. Residues 446–727 are Extracellular-facing; that stretch reads SVRSHRAKIL…LPSFHLQHIF (282 aa). In terms of domain architecture, STAS spans 471 to 722; that stretch reads DYREIITIPG…NSLSRLPSFH (252 aa). The interval 592-727 is interaction with RACGAP1; it reads TVSSMSQKNQ…LPSFHLQHIF (136 aa).

The protein belongs to the SLC26A/SulP transporter (TC 2.A.53) family. In terms of assembly, interacts with RACGAP1. Interacts with CFTR; stimulates anion transport activity of CFTR. N-glycosylated.

The protein localises to the membrane. It carries out the reaction sulfate(out) + chloride(in) = sulfate(in) + chloride(out). The enzyme catalyses oxalate(in) + chloride(out) = oxalate(out) + chloride(in). Functionally, antiporter that mediates the exchange of sulfate and oxalate against chloride ions across a membrane. Stimulates anion transport activity of CFTR. May cooperate with CFTR in the regulation of chloride and bicarbonate ions fluxes required for activation of the ADCY10/PKA pathway during sperm motility and sperm capacitation. May play a role in sperm tail differentiation and motility and hence male fertility. The protein is Testis anion transporter 1 of Macaca fascicularis (Crab-eating macaque).